The following is a 341-amino-acid chain: Biotin synthase (341 aa).

A Radical SAM core domain is found at 39–263 (EQVQLCTLLS…VAVARITMPL (225 aa)). The [4Fe-4S] cluster site is built by Cys-54, Cys-58, and Cys-61. 4 residues coordinate [2Fe-2S] cluster: Cys-98, Cys-129, Cys-189, and Arg-267.

This sequence belongs to the radical SAM superfamily. Biotin synthase family. In terms of assembly, homodimer. [4Fe-4S] cluster serves as cofactor. It depends on [2Fe-2S] cluster as a cofactor.

The enzyme catalyses (4R,5S)-dethiobiotin + (sulfur carrier)-SH + 2 reduced [2Fe-2S]-[ferredoxin] + 2 S-adenosyl-L-methionine = (sulfur carrier)-H + biotin + 2 5'-deoxyadenosine + 2 L-methionine + 2 oxidized [2Fe-2S]-[ferredoxin]. Its pathway is cofactor biosynthesis; biotin biosynthesis; biotin from 7,8-diaminononanoate: step 2/2. In terms of biological role, catalyzes the conversion of dethiobiotin (DTB) to biotin by the insertion of a sulfur atom into dethiobiotin via a radical-based mechanism. The chain is Biotin synthase from Erythrobacter litoralis (strain HTCC2594).